The sequence spans 162 residues: Eukaryotic translation initiation factor 5 (162 aa).

The interval 59–162 is disordered; sequence PPNLNPAVQG…EKDRMDIFYE (104 aa). Polar residues predominate over residues 85-109; sequence GDTNGDTSQVDDQNESLEASVNENS. Positions 148–162 are enriched in basic and acidic residues; sequence DLEKREKDRMDIFYE.

It belongs to the eIF-2-beta/eIF-5 family.

Catalyzes the hydrolysis of GTP bound to the 40S ribosomal initiation complex (40S.mRNA.Met-tRNA[F].eIF-2.GTP) with the subsequent joining of a 60S ribosomal subunit resulting in the release of eIF-2 and the guanine nucleotide. The subsequent joining of a 60S ribosomal subunit results in the formation of a functional 80S initiation complex (80S.mRNA.Met-tRNA[F]). This Tribolium castaneum (Red flour beetle) protein is Eukaryotic translation initiation factor 5.